The following is a 501-amino-acid chain: MKKRALISVFDKDGVLELAKFLRDRDVEIISSGGTYKYLKENNIEVKEISEITDFPEMLDGRVKTLHPLVHAGILAIRDNKEHMKTLEKREINTIDYVVVNLYPFFEKVRENLSFEEKVEFIDIGGPTMLRAAAKNFKDVVVLSDKKDYEKVMNEIKENNCVSFKLRKTLAGKVFNLMSAYDAAISNFLLEGEEEYPEYLSVSYKKIQDLRYGENPHQGAAYYSSTEFDGAMNSFEILNGKALSYNNIKDLDIAWKVACEFEETACCALKHNTPCGVAVGENSKEVYLKAYDADPVSIFGGIVAINRKIDKATAEEMVKIFLEVVAAPDFDEDALEVLRTKKNLRVIKCKNTPQAKNYMVTVDGGILVQGEDNKLANEYKVVTKKEPTEMELRDMIFGMKVVKYVKSNAIVVVKDGVATGIGGGQVNRIWATKEALERGKGGAVLASDAFFPFRDCVDEAAKNGIKAIIQPGGSIRDEESVEACNEHGISMVFTGVRHFKH.

The MGS-like domain occupies 1 to 144 (MKKRALISVF…KNFKDVVVLS (144 aa)).

This sequence belongs to the PurH family.

The enzyme catalyses (6R)-10-formyltetrahydrofolate + 5-amino-1-(5-phospho-beta-D-ribosyl)imidazole-4-carboxamide = 5-formamido-1-(5-phospho-D-ribosyl)imidazole-4-carboxamide + (6S)-5,6,7,8-tetrahydrofolate. The catalysed reaction is IMP + H2O = 5-formamido-1-(5-phospho-D-ribosyl)imidazole-4-carboxamide. It functions in the pathway purine metabolism; IMP biosynthesis via de novo pathway; 5-formamido-1-(5-phospho-D-ribosyl)imidazole-4-carboxamide from 5-amino-1-(5-phospho-D-ribosyl)imidazole-4-carboxamide (10-formyl THF route): step 1/1. Its pathway is purine metabolism; IMP biosynthesis via de novo pathway; IMP from 5-formamido-1-(5-phospho-D-ribosyl)imidazole-4-carboxamide: step 1/1. This is Bifunctional purine biosynthesis protein PurH from Clostridium perfringens (strain SM101 / Type A).